The following is a 208-amino-acid chain: Small ribosomal subunit protein eS8 (208 aa).

Residues 1–40 (MGISRDNWHKRRKTGGKRKPVHKKRKYELGRPPSNTKLGP) are disordered. Basic residues predominate over residues 8–26 (WHKRRKTGGKRKPVHKKRK).

The protein belongs to the eukaryotic ribosomal protein eS8 family. In terms of assembly, component of the small ribosomal subunit.

It localises to the cytoplasm. Component of the small ribosomal subunit. The ribosome is a large ribonucleoprotein complex responsible for the synthesis of proteins in the cell. The chain is Small ribosomal subunit protein eS8 (rps8) from Ictalurus punctatus (Channel catfish).